Consider the following 1032-residue polypeptide: Connector enhancer of kinase suppressor of ras 2 (1032 aa).

Positions 11 to 76 constitute an SAM domain; the sequence is WSPSQVVDWM…LEAVDLLCAL (66 aa). Position 12 is a phosphoserine (serine 12). The 95-residue stretch at 84–178 folds into the CRIC domain; it reads NLKTLSHKLN…TIVQQDCTVY (95 aa). One can recognise a PDZ domain in the interval 215-297; it reads VIQLANIKPS…GVILTLKKRP (83 aa). The segment covering 324 to 340 has biased composition (low complexity); that stretch reads RSPTSSVATPSSTISTP. Residues 324–349 are disordered; sequence RSPTSSVATPSSTISTPTKRDSSALQ. The 184-residue stretch at 332–515 folds into the DUF1170 domain; that stretch reads TPSSTISTPT…PTHYSLLPSL (184 aa). Residues serine 338 and serine 390 each carry the phosphoserine modification. Positions 480–509 are disordered; it reads EEYMFQRNSKKDTGKKSKKKGDKSTSPTHY. The PH domain occupies 570 to 669; sequence RGDCEGWLWK…WLNRINMLTA (100 aa). The tract at residues 682–766 is disordered; the sequence is DYWSESDKEE…PIRKTASQRR (85 aa). Tyrosine 683 is modified (phosphotyrosine). A compositionally biased stretch (acidic residues) spans 683–693; the sequence is YWSESDKEEAD. A phosphoserine mark is found at serine 685 and serine 687. The segment covering 701-714 has biased composition (pro residues); it reads DSPPPPYDTYPRPP. A compositionally biased stretch (low complexity) spans 730 to 740; it reads LSSTETSQSQS. A phosphoserine mark is found at serine 756 and serine 767. The segment at 866–900 is disordered; it reads DPQDDIQPPEVEEEEEEEEEEAAGENIGEKNENRE. A coiled-coil region spans residues 874–917; the sequence is PEVEEEEEEEEEEAAGENIGEKNENREEKLGDSLQDLYRALEEA. Positions 875-888 are enriched in acidic residues; sequence EVEEEEEEEEEEAA. Serine 906 is subject to Phosphoserine.

The protein belongs to the CNKSR family. In terms of assembly, interacts with RAF1, RAB2L and RAL GTPase proteins. Interacts with DLG4 and AIP1. In terms of processing, phosphorylated on tyrosine. Expressed in neurons and localized in the cell body and neurites.

The protein resides in the cytoplasm. It localises to the membrane. May function as an adapter protein or regulator of Ras signaling pathways, in synaptic junctions. The chain is Connector enhancer of kinase suppressor of ras 2 (Cnksr2) from Rattus norvegicus (Rat).